The following is a 73-amino-acid chain: Translation initiation factor IF-1 (73 aa).

Residues 1-73 (MAKKDGAIEI…TRGRIVYRYK (73 aa)) form the S1-like domain.

It belongs to the IF-1 family. As to quaternary structure, component of the 30S ribosomal translation pre-initiation complex which assembles on the 30S ribosome in the order IF-2 and IF-3, IF-1 and N-formylmethionyl-tRNA(fMet); mRNA recruitment can occur at any time during PIC assembly.

The protein localises to the cytoplasm. Functionally, one of the essential components for the initiation of protein synthesis. Stabilizes the binding of IF-2 and IF-3 on the 30S subunit to which N-formylmethionyl-tRNA(fMet) subsequently binds. Helps modulate mRNA selection, yielding the 30S pre-initiation complex (PIC). Upon addition of the 50S ribosomal subunit IF-1, IF-2 and IF-3 are released leaving the mature 70S translation initiation complex. This is Translation initiation factor IF-1 from Thermobifida fusca (strain YX).